Reading from the N-terminus, the 257-residue chain is Snake venom serine proteinase 11 (257 aa).

A signal peptide spans 1 to 18; the sequence is MVLIRVLANLLILQLSYA. Residues 19 to 24 constitute a propeptide that is removed on maturation; that stretch reads QKSSEL. Residues 25–248 form the Peptidase S1 domain; the sequence is VVGGDECNIN…YTEWIQSIIT (224 aa). Intrachain disulfides connect C31–C162, C49–C65, C97–C255, C141–C209, C173–C188, and C199–C224. Residues H64 and D109 each act as charge relay system in the active site. N-linked (GlcNAc...) asparagine glycosylation occurs at N120. The active-site Charge relay system is the S203.

This sequence belongs to the peptidase S1 family. Snake venom subfamily. Monomer. In terms of tissue distribution, expressed by the venom gland.

Its subcellular location is the secreted. Its function is as follows. Snake venom serine protease that may act in the hemostasis system of the prey. The sequence is that of Snake venom serine proteinase 11 from Crotalus adamanteus (Eastern diamondback rattlesnake).